A 294-amino-acid polypeptide reads, in one-letter code: Small ribosomal subunit protein uS2 (294 aa).

Belongs to the universal ribosomal protein uS2 family.

The protein is Small ribosomal subunit protein uS2 (rpsB) of Mycoplasma pneumoniae (strain ATCC 29342 / M129 / Subtype 1) (Mycoplasmoides pneumoniae).